The primary structure comprises 314 residues: S-methyl-5'-thioadenosine phosphorylase (314 aa).

Phosphate is bound by residues Ser31, 73–74 (RH), and 106–107 (SA). Position 207 (Met207) interacts with substrate. Thr208 is a binding site for phosphate. Position 231 to 233 (231 to 233 (DYD)) interacts with substrate.

This sequence belongs to the PNP/MTAP phosphorylase family. MTAP subfamily. As to quaternary structure, homohexamer. Dimer of a homotrimer.

The catalysed reaction is S-methyl-5'-thioadenosine + phosphate = 5-(methylsulfanyl)-alpha-D-ribose 1-phosphate + adenine. Its pathway is amino-acid biosynthesis; L-methionine biosynthesis via salvage pathway; S-methyl-5-thio-alpha-D-ribose 1-phosphate from S-methyl-5'-thioadenosine (phosphorylase route): step 1/1. Catalyzes the reversible phosphorylation of S-methyl-5'-thioadenosine (MTA) to adenine and 5-methylthioribose-1-phosphate. Involved in the breakdown of MTA, a major by-product of polyamine biosynthesis. Responsible for the first step in the methionine salvage pathway after MTA has been generated from S-adenosylmethionine. Has broad substrate specificity with 6-aminopurine nucleosides as preferred substrates. The protein is S-methyl-5'-thioadenosine phosphorylase of Prochlorococcus marinus (strain SARG / CCMP1375 / SS120).